We begin with the raw amino-acid sequence, 574 residues long: Mitochondrial distribution and morphology protein 34 (574 aa).

Positions 1-195 (MAFNFNWSPL…LPAIIHRLSL (195 aa)) constitute an SMP-LTD domain. Disordered stretches follow at residues 210–233 (RESPAASASGPGEDPLLSPPKDPV), 301–403 (EGAA…TPPT), and 479–515 (SADGAKTSSQQQPISHGSYLAPREKSHEASSAYESNA). Composition is skewed to low complexity over residues 212–224 (SPAASASGPGEDP), 302–314 (GAASGVVSPGSPV), and 323–334 (SSPLSSLQDASS). Residues 335 to 345 (VLSLQNRSTTP) are compositionally biased toward polar residues. Positions 346 to 359 (GSSFSGYGLSLGAG) are enriched in low complexity. The segment covering 360-373 (RHSKTRPTRKRKKR) has biased composition (basic residues). The span at 374-385 (VVDLRKHNKPAD) shows a compositional bias: basic and acidic residues. Residues 393-403 (STFTESTTPPT) show a composition bias toward low complexity. The segment covering 484–493 (KTSSQQQPIS) has biased composition (polar residues).

The protein belongs to the MDM34 family. In terms of assembly, component of the ER-mitochondria encounter structure (ERMES) or MDM complex, composed of MMM1, MDM10, MDM12 and MDM34.

It is found in the mitochondrion outer membrane. In terms of biological role, component of the ERMES/MDM complex, which serves as a molecular tether to connect the endoplasmic reticulum (ER) and mitochondria. Components of this complex are involved in the control of mitochondrial shape and protein biogenesis, and function in nonvesicular lipid trafficking between the ER and mitochondria. MDM34 is required for the interaction of the ER-resident membrane protein MMM1 and the outer mitochondrial membrane-resident beta-barrel protein MDM10. The polypeptide is Mitochondrial distribution and morphology protein 34 (Coccidioides immitis (strain RS) (Valley fever fungus)).